A 147-amino-acid chain; its full sequence is Hemoglobin subunit gamma (147 aa).

In terms of domain architecture, Globin spans 3 to 147 (HFTAEEKAAI…VATALAHKYH (145 aa)). Heme b is bound by residues His64 and His93.

This sequence belongs to the globin family. In terms of assembly, heterotetramer of two alpha chains and two gamma chains. Red blood cells.

In terms of biological role, this protein functions as an embryonic globin, but the gene structure and chromosomal location resemble more closely the human gamma chain gene, which codes for a fetal globin. The protein is Hemoglobin subunit gamma (HBG) of Oryctolagus cuniculus (Rabbit).